A 914-amino-acid polypeptide reads, in one-letter code: Solute carrier family 12 member 9 (914 aa).

The Cytoplasmic portion of the chain corresponds to 1 to 36 (MASENSPLLAYRLLGEEGAAFPPNGAGGSGVASARK). Residue S6 is modified to Phosphoserine. Residues 37 to 57 (LSTFLGVVVPTVLSMFSIVVF) form a helical membrane-spanning segment. Over 58-72 (LRIGFVVGHAGLLQA) the chain is Extracellular. A helical transmembrane segment spans residues 73–93 (LAMLLVAYVILALTVLSVCAI). Residues 94–119 (ATNGAVRGGGAYFMISRTLGPEVGGS) are Cytoplasmic-facing. Residues 120 to 140 (IGLMFYLANVCGCAVSLLGLV) traverse the membrane as a helical segment. Residues 141–167 (ESILDVFGADVTGSSGIKVLPQGYGWN) are Extracellular-facing. Residues 168 to 188 (LLYGSLLLGLVGGVCALGAGL) form a helical membrane-spanning segment. Over 189 to 193 (YARAS) the chain is Cytoplasmic. A helical transmembrane segment spans residues 194-214 (FLTFLLVSGSLASVLVSFVAV). Residues 215 to 262 (GPRNITLAPRPGTNGSSVPPRHGHFTGFNGSTLKDNLGAGYAEDYTTG) lie on the Extracellular side of the membrane. N-linked (GlcNAc...) asparagine glycans are attached at residues N218, N228, and N243. A helical transmembrane segment spans residues 263-283 (AMMTFASVFAVLFNGCTGIMA). Residues 284-297 (GANMSGELKDPSRA) are Cytoplasmic-facing. A helical membrane pass occupies residues 298-318 (IPLGTIIAVAYTFFIYILLFF). The Extracellular portion of the chain corresponds to 319–338 (LSSFTCDRALLQGDYGFFRD). The chain crosses the membrane as a helical span at residues 339 to 359 (ISLWPPLVLIGIYATALSASM). Over 360 to 376 (SSLIGASRILHALAQDD) the chain is Cytoplasmic. The helical transmembrane segment at 377–399 (LFGVILAPAKVVSGGGNPWGAVL) threads the bilayer. Residues 400-416 (YSWGLVQLVLLAGKLNT) are Extracellular-facing. The helical transmembrane segment at 417–437 (LAAVVTVFYLVAYAAVDLSCL) threads the bilayer. The Cytoplasmic segment spans residues 438–466 (SLEWASAPNFRPTFSLFSWHTCLLGVASC). A helical transmembrane segment spans residues 467-487 (LLMMFLISPGAAGGSLLLMGL). The Extracellular portion of the chain corresponds to 488 to 740 (LSALLTARGG…LLRPRGGPGY (253 aa)). Residues 645-678 (PAFSEPAEGTREGGSPALSTLFPPPRAPGSPRAL) form a disordered region. The helical transmembrane segment at 741 to 761 (VDVCGLFLLQMATILSMVPAW) threads the bilayer. At 762 to 914 (HSARLRIFLC…GVTPVTCTDL (153 aa)) the chain is on the cytoplasmic side. A disordered region spans residues 843-864 (QQGRGTGGGPGGPEGRDGEEGP). Residues 846–855 (RGTGGGPGGP) are compositionally biased toward gly residues.

Belongs to the SLC12A transporter family. Interacts with SLC12A1.

Its subcellular location is the cell membrane. It localises to the lysosome membrane. May be an inhibitor of SLC12A1. Seems to correspond to a subunit of a multimeric transport system and thus, additional subunits may be required for its function. May play a role in lysosomal ion flux and osmoregulation. The polypeptide is Solute carrier family 12 member 9 (Slc12a9) (Rattus norvegicus (Rat)).